Consider the following 207-residue polypeptide: Outer-membrane lipoprotein LolB (207 aa).

The first 21 residues, 1–21 (MTLPDFRLIRLLPLASLVLTA), serve as a signal peptide directing secretion. Cys22 is lipidated: N-palmitoyl cysteine. Cys22 is lipidated: S-diacylglycerol cysteine.

Belongs to the LolB family. In terms of assembly, monomer.

It is found in the cell outer membrane. Plays a critical role in the incorporation of lipoproteins in the outer membrane after they are released by the LolA protein. This chain is Outer-membrane lipoprotein LolB, found in Citrobacter koseri (strain ATCC BAA-895 / CDC 4225-83 / SGSC4696).